The chain runs to 143 residues: Hemoglobin subunit alpha (143 aa).

The region spanning 2 to 143 (SLTARDKSVV…LSAALADKYR (142 aa)) is the Globin domain. O2 is bound at residue histidine 60. Position 89 (histidine 89) interacts with heme b.

This sequence belongs to the globin family. In terms of assembly, heterotetramer of two alpha chains and two beta chains. Red blood cells.

In terms of biological role, involved in oxygen transport from gills to the various peripheral tissues. The sequence is that of Hemoglobin subunit alpha (hba) from Salmo salar (Atlantic salmon).